The primary structure comprises 154 residues: Large-conductance mechanosensitive channel (154 aa).

The next 3 membrane-spanning stretches (helical) occupy residues Val16–Val36, Asp39–Ile59, and Gly89–Met109.

It belongs to the MscL family. Homopentamer.

It localises to the cell inner membrane. Channel that opens in response to stretch forces in the membrane lipid bilayer. May participate in the regulation of osmotic pressure changes within the cell. The chain is Large-conductance mechanosensitive channel from Zymomonas mobilis subsp. mobilis (strain ATCC 31821 / ZM4 / CP4).